The following is a 68-amino-acid chain: Peptide Hp1090 (68 aa).

The first 23 residues, 1–23 (MKTQFAIFLITLVLFQMFSQSDA), serve as a signal peptide directing secretion. At phenylalanine 36 the chain carries Phenylalanine amide. The propeptide occupies 40-68 (GLSDLDDLDESFDGEVSQADIDFLKELMQ).

The protein belongs to the non-disulfide-bridged peptide (NDBP) superfamily. Short antimicrobial peptide (group 4) family. In terms of tissue distribution, expressed by the venom gland.

It is found in the secreted. It localises to the target cell membrane. Functionally, amphipathic peptide which inhibits the growth of Gram-positive bacteria. This chain is Peptide Hp1090, found in Heterometrus petersii (Asian forest scorpion).